Consider the following 466-residue polypeptide: CBL-interacting protein kinase 20 (466 aa).

A Protein kinase domain is found at 12–276 (YELGRSLGHG…IDELVKHPWF (265 aa)). ATP-binding positions include 18 to 26 (LGHGTFSKV) and Lys41. The active-site Proton acceptor is Asp139. The tract at residues 162-191 (DFGLSALSASRRHDGLLHTTCGTPSYVAPE) is activation loop. The NAF domain maps to 297 to 329 (KPANAAMNMKPASLNAFDIISLSQGFDLSGMFC). The segment at 337-366 (TQDQLFVTGKPATAIVSRLEEIAETEHFTV) is PPI. Positions 446–466 (ASEKNQLPAVSEVSPLSSPRN) are disordered.

The protein belongs to the protein kinase superfamily. CAMK Ser/Thr protein kinase family. SNF1 subfamily. Mn(2+) is required as a cofactor.

It carries out the reaction L-seryl-[protein] + ATP = O-phospho-L-seryl-[protein] + ADP + H(+). The enzyme catalyses L-threonyl-[protein] + ATP = O-phospho-L-threonyl-[protein] + ADP + H(+). In terms of biological role, CIPK serine-threonine protein kinases interact with CBL proteins. Binding of a CBL protein to the regulatory NAF domain of CIPK protein lead to the activation of the kinase in a calcium-dependent manner. This is CBL-interacting protein kinase 20 (CIPK20) from Oryza sativa subsp. japonica (Rice).